The chain runs to 360 residues: Insulin gene enhancer protein ISL-2 (360 aa).

LIM zinc-binding domains lie at 25–86 (AMCV…RLFG) and 87–149 (IKCA…LLER). The segment at 151-177 (AAGSPRSPGPLPGTPPGLHLPDAGSGQ) is disordered. 2 positions are modified to phosphoserine: serine 154 and serine 157. A DNA-binding region (homeobox) is located at residues 192-251 (TTRVRTVLNEKQLHTLRTCYAANPRPDALMKEQLVEMTGLSPRVIRVWFQNKRCKDKKKS). The tract at residues 273–302 (GTLLVAGSPSAHENAVQGSAVEVQTYQPPW) is LIM-binding domain (LID). A Phosphoserine modification is found at serine 280. The span at 328–337 (SGSLGNSSGS) shows a compositional bias: low complexity. The tract at residues 328–360 (SGSLGNSSGSDVTSLSSQLPDTPNSMVPSPVET) is disordered. Polar residues predominate over residues 338-360 (DVTSLSSQLPDTPNSMVPSPVET).

In terms of assembly, interacts with LHX4.

Its subcellular location is the nucleus. In terms of biological role, transcriptional factor that defines subclasses of motoneurons that segregate into columns in the spinal cord and select distinct axon pathways. This is Insulin gene enhancer protein ISL-2 (Isl2) from Rattus norvegicus (Rat).